Consider the following 198-residue polypeptide: Prostamide/prostaglandin F synthase (198 aa).

Residue Tyr-108 is modified to Phosphotyrosine.

This sequence belongs to the peroxiredoxin-like PRXL2 family. Prostamide/prostaglandin F synthase subfamily.

The protein resides in the cytoplasm. The protein localises to the cytosol. The enzyme catalyses prostaglandin H2 + [thioredoxin]-dithiol = prostaglandin F2alpha + [thioredoxin]-disulfide. It carries out the reaction prostamide F2alpha + [thioredoxin]-disulfide = prostamide H2 + [thioredoxin]-dithiol. Its function is as follows. Catalyzes the reduction of prostaglandin-ethanolamide H(2) (prostamide H(2)) to prostamide F(2alpha) with NADPH as proton donor. Also able to reduce prostaglandin H(2) to prostaglandin F(2alpha). The polypeptide is Prostamide/prostaglandin F synthase (Homo sapiens (Human)).